A 140-amino-acid chain; its full sequence is Nucleoside diphosphate kinase (140 aa).

ATP-binding residues include Lys-11, Phe-59, Arg-87, Thr-93, Arg-104, and Asn-114. His-117 acts as the Pros-phosphohistidine intermediate in catalysis.

The protein belongs to the NDK family. As to quaternary structure, homotetramer. Mg(2+) serves as cofactor.

Its subcellular location is the cytoplasm. It catalyses the reaction a 2'-deoxyribonucleoside 5'-diphosphate + ATP = a 2'-deoxyribonucleoside 5'-triphosphate + ADP. The catalysed reaction is a ribonucleoside 5'-diphosphate + ATP = a ribonucleoside 5'-triphosphate + ADP. Functionally, major role in the synthesis of nucleoside triphosphates other than ATP. The ATP gamma phosphate is transferred to the NDP beta phosphate via a ping-pong mechanism, using a phosphorylated active-site intermediate. The polypeptide is Nucleoside diphosphate kinase (Jannaschia sp. (strain CCS1)).